Consider the following 575-residue polypeptide: Glycine--tRNA ligase (575 aa).

Residues Arg96 and Glu162 each coordinate substrate. ATP-binding positions include 194–196, 204–209, 327–328, and 450–453; these read RNE, IRLREF, EC, and GIDR. Residue 209–213 coordinates substrate; it reads FTQAE. 446-450 serves as a coordination point for substrate; sequence EPSYG.

Belongs to the class-II aminoacyl-tRNA synthetase family.

The protein localises to the cytoplasm. The catalysed reaction is tRNA(Gly) + glycine + ATP = glycyl-tRNA(Gly) + AMP + diphosphate. Functionally, catalyzes the attachment of glycine to tRNA(Gly). The protein is Glycine--tRNA ligase of Methanococcus maripaludis (strain C5 / ATCC BAA-1333).